Consider the following 232-residue polypeptide: Small ribosomal subunit protein uS3 (232 aa).

The KH type-2 domain occupies 39–107; the sequence is IRAILHKELK…DVVINIVEIR (69 aa).

Belongs to the universal ribosomal protein uS3 family. As to quaternary structure, part of the 30S ribosomal subunit. Forms a tight complex with proteins S10 and S14.

In terms of biological role, binds the lower part of the 30S subunit head. Binds mRNA in the 70S ribosome, positioning it for translation. This Rhodopseudomonas palustris (strain BisA53) protein is Small ribosomal subunit protein uS3.